A 156-amino-acid chain; its full sequence is Ribosomal RNA large subunit methyltransferase H (156 aa).

Residues leucine 73, glycine 104, and 123 to 128 (IGPLTL) each bind S-adenosyl-L-methionine.

The protein belongs to the RNA methyltransferase RlmH family. As to quaternary structure, homodimer.

Its subcellular location is the cytoplasm. The catalysed reaction is pseudouridine(1915) in 23S rRNA + S-adenosyl-L-methionine = N(3)-methylpseudouridine(1915) in 23S rRNA + S-adenosyl-L-homocysteine + H(+). In terms of biological role, specifically methylates the pseudouridine at position 1915 (m3Psi1915) in 23S rRNA. The polypeptide is Ribosomal RNA large subunit methyltransferase H (Stenotrophomonas maltophilia (strain R551-3)).